Reading from the N-terminus, the 415-residue chain is DNA primase DnaG (415 aa).

Positions 171 to 250 (DAIIIVEGRA…AFSPRGKSVE (80 aa)) constitute a Toprim domain. Residues E177, D219, and D221 each coordinate Mg(2+). The tract at residues 280–323 (ELPGDLGGRPARTAPAHDEGGNSDTTGKQAVSQKRIRDGTSKVP) is disordered. Residues 301 to 311 (NSDTTGKQAVS) are compositionally biased toward polar residues.

The protein belongs to the archaeal DnaG primase family. Forms a ternary complex with MCM helicase and DNA. Mg(2+) serves as cofactor.

The enzyme catalyses ssDNA + n NTP = ssDNA/pppN(pN)n-1 hybrid + (n-1) diphosphate.. RNA polymerase that catalyzes the synthesis of short RNA molecules used as primers for DNA polymerase during DNA replication. This Methanoregula boonei (strain DSM 21154 / JCM 14090 / 6A8) protein is DNA primase DnaG.